Consider the following 255-residue polypeptide: Hemin import ATP-binding protein HmuV (255 aa).

Residues 2 to 238 (LDVEGLHLKR…AALNAVFGID (237 aa)) enclose the ABC transporter domain. Residue 34–41 (GPNGAGKS) coordinates ATP.

This sequence belongs to the ABC transporter superfamily. Heme (hemin) importer (TC 3.A.1.14.5) family. In terms of assembly, the complex is composed of two ATP-binding proteins (HmuV), two transmembrane proteins (HmuU) and a solute-binding protein (HmuT).

It localises to the cell inner membrane. Its function is as follows. Part of the ABC transporter complex HmuTUV involved in hemin import. Responsible for energy coupling to the transport system. The protein is Hemin import ATP-binding protein HmuV of Pseudomonas entomophila (strain L48).